A 269-amino-acid polypeptide reads, in one-letter code: Photosystem I assembly factor PSA3, chloroplastic (269 aa).

A chloroplast-targeting transit peptide spans methionine 1–valine 37.

Its subcellular location is the plastid. The protein localises to the chloroplast thylakoid membrane. Functionally, nuclear genome-encoded factor required for the accumulation of photosystem I (PSI). Functions as a PSI biogenesis factor. Cooperates with PYG7 to promote the stable assembly of PSI in the thylakoid membrane. May target primarily the PsaC subunit. Does not seem to be required for the expression of chloroplast genes encoding PSI subunits. This Zea mays (Maize) protein is Photosystem I assembly factor PSA3, chloroplastic.